The chain runs to 484 residues: Glutamyl-tRNA(Gln) amidotransferase subunit A (484 aa).

Active-site charge relay system residues include Lys77 and Ser152. Catalysis depends on Ser176, which acts as the Acyl-ester intermediate.

The protein belongs to the amidase family. GatA subfamily. As to quaternary structure, heterotrimer of A, B and C subunits.

It catalyses the reaction L-glutamyl-tRNA(Gln) + L-glutamine + ATP + H2O = L-glutaminyl-tRNA(Gln) + L-glutamate + ADP + phosphate + H(+). Functionally, allows the formation of correctly charged Gln-tRNA(Gln) through the transamidation of misacylated Glu-tRNA(Gln) in organisms which lack glutaminyl-tRNA synthetase. The reaction takes place in the presence of glutamine and ATP through an activated gamma-phospho-Glu-tRNA(Gln). The sequence is that of Glutamyl-tRNA(Gln) amidotransferase subunit A from Lacticaseibacillus paracasei (strain ATCC 334 / BCRC 17002 / CCUG 31169 / CIP 107868 / KCTC 3260 / NRRL B-441) (Lactobacillus paracasei).